We begin with the raw amino-acid sequence, 514 residues long: Putative thymidine phosphorylase (514 aa).

This sequence belongs to the thymidine/pyrimidine-nucleoside phosphorylase family. Type 2 subfamily.

It carries out the reaction thymidine + phosphate = 2-deoxy-alpha-D-ribose 1-phosphate + thymine. This Sphingopyxis alaskensis (strain DSM 13593 / LMG 18877 / RB2256) (Sphingomonas alaskensis) protein is Putative thymidine phosphorylase.